We begin with the raw amino-acid sequence, 601 residues long: Glutathione-regulated potassium-efflux system protein KefB (601 aa).

13 consecutive transmembrane segments (helical) span residues 5–25 (DLLL…PIAA), 29–49 (IGAV…GLGF), 55–75 (EILH…GLEL), 87–107 (IFGI…GLLM), 115–135 (AAVV…LQLM), 152–172 (VLLF…LLAG), 181–201 (LKIG…RYLL), 207–227 (FIAG…LVLG), 230–250 (LFMD…GILL), 268–288 (GLLL…GVLY), 291–311 (ILWV…VLYG), 324–344 (LPFA…FSSA), and 356–376 (ALLL…MKGI). Positions 400-519 (KPQVIIVGFG…AGVKQFSRET (120 aa)) constitute an RCK N-terminal domain.

This sequence belongs to the monovalent cation:proton antiporter 2 (CPA2) transporter (TC 2.A.37) family. KefB subfamily. Interacts with the regulatory subunit KefG.

The protein resides in the cell inner membrane. Pore-forming subunit of a potassium efflux system that confers protection against electrophiles. Catalyzes K(+)/H(+) antiport. The polypeptide is Glutathione-regulated potassium-efflux system protein KefB (Cronobacter sakazakii (strain ATCC BAA-894) (Enterobacter sakazakii)).